The chain runs to 247 residues: MKKNHEKHADKKEAAKEELEKDLQPKDESAVKDEQGAGCGCETSKENPQEDKAEQNSSTGGKCEKNDDVLSPEKRIEELEAKCRDWQDQYLRKAADFENYRKRMIREKQEAIDYANSNLLLDLVQVLDDFDRAIDAGKTQGGESVNNAFVEGVVMIKNQMVSMLSSKYGLSYYPAKGEAFDPNLHEAVSMIQSPDVKEAVVGEELQKGYKLKERVIRHSKVMVLMPAEKQDEKKAEESEAADKKNEN.

2 disordered regions span residues 1-68 and 226-247; these read MKKN…KNDD and PAEKQDEKKAEESEAADKKNEN. 3 stretches are compositionally biased toward basic and acidic residues: residues 7–35, 43–54, and 228–247; these read KHADKKEAAKEELEKDLQPKDESAVKDEQ, TSKENPQEDKAE, and EKQDEKKAEESEAADKKNEN.

Belongs to the GrpE family. In terms of assembly, homodimer.

The protein resides in the cytoplasm. Its function is as follows. Participates actively in the response to hyperosmotic and heat shock by preventing the aggregation of stress-denatured proteins, in association with DnaK and GrpE. It is the nucleotide exchange factor for DnaK and may function as a thermosensor. Unfolded proteins bind initially to DnaJ; upon interaction with the DnaJ-bound protein, DnaK hydrolyzes its bound ATP, resulting in the formation of a stable complex. GrpE releases ADP from DnaK; ATP binding to DnaK triggers the release of the substrate protein, thus completing the reaction cycle. Several rounds of ATP-dependent interactions between DnaJ, DnaK and GrpE are required for fully efficient folding. In Treponema denticola (strain ATCC 35405 / DSM 14222 / CIP 103919 / JCM 8153 / KCTC 15104), this protein is Protein GrpE.